Reading from the N-terminus, the 393-residue chain is Telomeric repeat-binding factor 2-interacting protein 1 (393 aa).

Ala2 carries the post-translational modification N-acetylalanine. Phosphoserine is present on residues Ser36 and Ser43. Residues 78 to 101 (FISTQYILDCVDRNEKLDLEAYRL) form the BRCT domain. Positions 104 to 132 (TEQASDPKPGASTEGSTEPEPQPLTGRIA) are disordered. A Glycyl lysine isopeptide (Lys-Gly) (interchain with G-Cter in SUMO2) cross-link involves residue Lys111. The region spanning 125 to 185 (QPLTGRIAYT…SLKDRYLKHL (61 aa)) is the Myb-like domain. 2 positions are modified to phosphoserine: Ser151 and Ser153. A Glycyl lysine isopeptide (Lys-Gly) (interchain with G-Cter in SUMO2) cross-link involves residue Lys191. Residues 193–304 (LLGNAPVSPS…EEEPKVSTQE (112 aa)) are disordered. Residues Ser200 and Ser203 each carry the phosphoserine modification. Residues Lys205, Lys209, and Lys237 each participate in a glycyl lysine isopeptide (Lys-Gly) (interchain with G-Cter in SUMO2) cross-link. Residues 223-252 (QNKRAPDLPEEECVKGEIKENGEADNKLFE) are compositionally biased toward basic and acidic residues. A compositionally biased stretch (acidic residues) spans 282–297 (TPEEDSETQPDEEEEE). Residue Lys366 forms a Glycyl lysine isopeptide (Lys-Gly) (interchain with G-Cter in SUMO2) linkage. The short motif at 377-393 (KKFGAQNVARRIEFRKK) is the Nuclear localization signal element.

It belongs to the RAP1 family. In terms of assembly, homodimer. Component of the shelterin complex (telosome) composed of TERF1, TERF2, TINF2, TERF2IP ACD and POT1. Binds to TERF2 (but not TERF1) with its C-terminus. Interacts with SLX4/BTBD12. Interacts with TERF2; the interaction is direct. Does not interact with TERF1. Associates with the I-kappa-B-kinase (IKK) core complex, composed of CHUK, IKBKB and IKBKG.

The protein resides in the nucleus. It localises to the cytoplasm. It is found in the chromosome. The protein localises to the telomere. In terms of biological role, acts both as a regulator of telomere function and as a transcription regulator. Involved in the regulation of telomere length and protection as a component of the shelterin complex (telosome). In contrast to other components of the shelterin complex, it is dispensible for telomere capping and does not participate in the protection of telomeres against non-homologous end-joining (NHEJ)-mediated repair. Instead, it is required to negatively regulate telomere recombination and is essential for repressing homology-directed repair (HDR), which can affect telomere length. Does not bind DNA directly: recruited to telomeric double-stranded 5'-TTAGGG-3' repeats via its interaction with TERF2. Independently of its function in telomeres, also acts as a transcription regulator: recruited to extratelomeric 5'-TTAGGG-3' sites via its association with TERF2 or other factors, and regulates gene expression. When cytoplasmic, associates with the I-kappa-B-kinase (IKK) complex and acts as a regulator of the NF-kappa-B signaling by promoting IKK-mediated phosphorylation of RELA/p65, leading to activate expression of NF-kappa-B target genes. This Mus musculus (Mouse) protein is Telomeric repeat-binding factor 2-interacting protein 1 (Terf2ip).